The sequence spans 255 residues: Type III pantothenate kinase (255 aa).

12–19 is a binding site for ATP; the sequence is DIGNSYTK. Residue 109–112 participates in substrate binding; it reads GDDL. D111 acts as the Proton acceptor in catalysis. Residue T133 coordinates ATP. T185 contributes to the substrate binding site.

The protein belongs to the type III pantothenate kinase family. In terms of assembly, homodimer. Requires NH4(+) as cofactor. K(+) serves as cofactor.

The protein localises to the cytoplasm. It catalyses the reaction (R)-pantothenate + ATP = (R)-4'-phosphopantothenate + ADP + H(+). Its pathway is cofactor biosynthesis; coenzyme A biosynthesis; CoA from (R)-pantothenate: step 1/5. Functionally, catalyzes the phosphorylation of pantothenate (Pan), the first step in CoA biosynthesis. This is Type III pantothenate kinase from Malacoplasma penetrans (strain HF-2) (Mycoplasma penetrans).